We begin with the raw amino-acid sequence, 107 residues long: Ferredoxin 1 (107 aa).

2 4Fe-4S ferredoxin-type domains span residues 2-30 (TFVV…YEGP) and 31-60 (NFLV…SEDE). [3Fe-4S] cluster contacts are provided by cysteine 9 and cysteine 17. Residues cysteine 21, cysteine 40, cysteine 43, and cysteine 46 each coordinate [4Fe-4S] cluster. Cysteine 50 contributes to the [3Fe-4S] cluster binding site.

Requires [4Fe-4S] cluster as cofactor. [3Fe-4S] cluster serves as cofactor.

Ferredoxins are iron-sulfur proteins that transfer electrons in a wide variety of metabolic reactions. The sequence is that of Ferredoxin 1 from Stutzerimonas stutzeri (Pseudomonas stutzeri).